The chain runs to 505 residues: Protein disulfide-isomerase A3 (505 aa).

The first 24 residues, 1 to 24 (MRFSCLALLPGVALLLASALLASA), serve as a signal peptide directing secretion. The Thioredoxin 1 domain maps to 25–133 (SDVLELTDEN…IVSHLKKQAG (109 aa)). Catalysis depends on nucleophile residues cysteine 57 and cysteine 60. A disulfide bond links cysteine 57 and cysteine 60. N6-methyllysine is present on lysine 61. Cysteine 85 and cysteine 92 are oxidised to a cystine. The residue at position 129 (lysine 129) is an N6-succinyllysine. Lysine 152 is subject to N6-acetyllysine. The residue at position 218 (lysine 218) is an N6-succinyllysine. Residue lysine 252 is modified to N6-acetyllysine. Position 319 is a phosphothreonine (threonine 319). One can recognise a Thioredoxin 2 domain in the interval 343 to 485 (SRDGKALERF…FISYLQREAT (143 aa)). Lysine 362 carries the post-translational modification N6-acetyllysine. Residues cysteine 406 and cysteine 409 each act as nucleophile in the active site. A disulfide bridge links cysteine 406 with cysteine 409. The interval 484–505 (ATNPPIIQEEKPKKKKKAQEDL) is disordered. Basic and acidic residues predominate over residues 491-505 (QEEKPKKKKKAQEDL). Residue lysine 494 is modified to N6-acetyllysine. Residues 502–505 (QEDL) carry the Prevents secretion from ER motif.

The protein belongs to the protein disulfide isomerase family. Part of the major histocompatibility complex class I (MHC I) peptide loading complex composed of TAP1, TAP2, B2M, MHC heavy chain, TAPBP, PDIA3, and CALR. Interacts with ERP27 and CANX. Interacts with SERPINA2 and with SERPINA1. Interacts with ATP2A2. In terms of processing, within the major histocompatibility complex class I (MHC I) peptide loading complex forms reversible disulfide-linked heterodimers with TAPBP as part of its protein folding chaperone activity. This is essential to assist the dynamic assembly of the MHC I complex with high affinity antigens in the endoplasmic reticulum. Post-translationally, phosphorylated. As to expression, in caput epididymal spermatozoa, detected in the head, mid and principal pieces. In cauda epididymal spermatozoa detected only in the acrosome (at protein level).

The protein localises to the endoplasmic reticulum. It localises to the endoplasmic reticulum lumen. Its subcellular location is the melanosome. It carries out the reaction Catalyzes the rearrangement of -S-S- bonds in proteins.. Seems to be inhibited by acidic phospholipids. Functionally, protein disulfide isomerase that catalyzes the formation, isomerization, and reduction or oxidation of disulfide bonds in client proteins and functions as a protein folding chaperone. Core component of the major histocompatibility complex class I (MHC I) peptide loading complex where it functions as an essential folding chaperone for TAPBP. Through TAPBP, assists the dynamic assembly of the MHC I complex with high affinity antigens in the endoplasmic reticulum. Therefore, plays a crucial role in the presentation of antigens to cytotoxic T cells in adaptive immunity. This is Protein disulfide-isomerase A3 (Pdia3) from Rattus norvegicus (Rat).